An 860-amino-acid polypeptide reads, in one-letter code: Alanine--tRNA ligase (860 aa).

4 residues coordinate Zn(2+): His-553, His-557, Cys-655, and His-659.

It belongs to the class-II aminoacyl-tRNA synthetase family. The cofactor is Zn(2+).

The protein resides in the cytoplasm. The catalysed reaction is tRNA(Ala) + L-alanine + ATP = L-alanyl-tRNA(Ala) + AMP + diphosphate. Functionally, catalyzes the attachment of alanine to tRNA(Ala) in a two-step reaction: alanine is first activated by ATP to form Ala-AMP and then transferred to the acceptor end of tRNA(Ala). Also edits incorrectly charged Ser-tRNA(Ala) and Gly-tRNA(Ala) via its editing domain. This Legionella pneumophila (strain Corby) protein is Alanine--tRNA ligase.